Reading from the N-terminus, the 519-residue chain is Probable anion transporter 3, chloroplastic (519 aa).

The transit peptide at 1 to 76 (MAPPGQLLPL…PPPPATSLPG (76 aa)) directs the protein to the chloroplast. Pro residues predominate over residues 56–72 (LPFAPPRRLSRPPPPAT). The interval 56–82 (LPFAPPRRLSRPPPPATSLPGASPGGG) is disordered. 12 consecutive transmembrane segments (helical) span residues 100 to 120 (VAAMLGLALALCNADRVVMSV), 138 to 158 (VVQSSFLWGYLVSPIIGGALV), 166 to 186 (VMAYGVALWSLATFLSPWAAA), 188 to 208 (SLWLFLSTRVLLGMAEGVALP), 229 to 249 (IAMAGFQLGNTIGLLLSPIIM), 253 to 273 (GIFGPFVIFGLFGFLWVLVWI), 326 to 346 (WALISANAMHSWGYFVILSWM), 362 to 382 (AWFSALPWVMMAVLGYVAGVV), 403 to 423 (IGFVGPGVALLGLNAAKSPVI), 424 to 444 (ASAWLTIAVGLKSFGHSGFLV), 460 to 480 (MSNTAGTFAAILGTVGAGFFV), and 488 to 508 (GFLILTSLLYFSSTLFWDIFA).

The protein belongs to the major facilitator superfamily. Sodium/anion cotransporter (TC 2.A.1.14) family.

It is found in the plastid. It localises to the chloroplast membrane. Its function is as follows. Probable anion transporter. In Oryza sativa subsp. japonica (Rice), this protein is Probable anion transporter 3, chloroplastic (PHT4;3).